The primary structure comprises 206 residues: Small ribosomal subunit protein eS1 (206 aa).

The protein belongs to the eukaryotic ribosomal protein eS1 family.

The protein is Small ribosomal subunit protein eS1 of Methanocorpusculum labreanum (strain ATCC 43576 / DSM 4855 / Z).